The following is a 237-amino-acid chain: DCN1-like protein 5 (237 aa).

Residue serine 41 is modified to Phosphoserine. In terms of domain architecture, DCUN1 spans 46–232 (FSRKKCLAWF…LLDEFVEWQK (187 aa)).

In terms of assembly, part of a complex that contains DCUN1D5, CUL1 and RBX1; this interaction is bridged by CUL1. Interacts (via the DCUN1 domain) with the unneddylated cullins: interacts with CUL1, CUL2, CUL3, CUL4A, CUL4B and CUL5; these interactions promote the cullin neddylation and the identity of the cullin dictates the affinity of the interaction. Interacts (via DCUN1 domain) with UBE2M (N-terminally acetylated form) and probably with UBE2F (N-terminally acetylated form). May also interact with regulators or subunits of cullin-RING ligases such as RBX1, RNF7, ELOB and DDB1; these interactions are bridged by cullins. Interacts with CAND1; this interaction is bridged by cullins and strongly inhibits the neddylation of cullins. These CAND-cullin-DCNL complexes can only be neddylated in the presence of a substrate adapter. Phosphorylation at Ser-41 is independent of cullin's interaction. Phosphorylated in response to both TICAM1 and MYD88 dependent Toll-like receptor (TLR) pathway activation. Phosphorylated in response to IL1B stimulation.

Its subcellular location is the nucleus. It is found in the cytoplasm. The protein localises to the cytoskeleton. It localises to the spindle. Contributes to the neddylation of all cullins by transferring NEDD8 from N-terminally acetylated NEDD8-conjugating E2s enzyme to different cullin C-terminal domain-RBX complexes which is necessary for the activation of cullin-RING E3 ubiquitin ligases (CRLs). May play a role in DNA damage response and may participate in cell proliferation and anchorage-independent cell growth. The polypeptide is DCN1-like protein 5 (Rattus norvegicus (Rat)).